A 160-amino-acid chain; its full sequence is Nuclear transcription factor Y subunit B-5 (160 aa).

A DNA-binding region spans residues 56–62 (LPIANVG). Positions 83–94 (MQECVSEFISFV) are subunit association domain (SAD).

The protein belongs to the NFYB/HAP3 subunit family. Heterotrimeric transcription factor composed of three components, NF-YA, NF-YB and NF-YC. NF-YB and NF-YC must interact and dimerize for NF-YA association and DNA binding. As to expression, expressed in flowers and siliques.

Its subcellular location is the nucleus. Its function is as follows. Component of the NF-Y/HAP transcription factor complex. The NF-Y complex stimulates the transcription of various genes by recognizing and binding to a CCAAT motif in promoters. The protein is Nuclear transcription factor Y subunit B-5 (NFYB5) of Arabidopsis thaliana (Mouse-ear cress).